A 102-amino-acid chain; its full sequence is Vesicle-associated membrane protein 5 (102 aa).

At 1-72 (MAGKELERCQ…RWENIRCRVY (72 aa)) the chain is on the cytoplasmic side. A v-SNARE coiled-coil homology domain is found at 5–65 (ELERCQRQAD…KTLAQQKRWE (61 aa)). Residues serine 41, serine 48, and serine 49 each carry the phosphoserine modification. The helical; Anchor for type IV membrane protein transmembrane segment at 73-93 (LGLAVAGGLLLILVVLLVIFL) threads the bilayer. Over 94–102 (PSGEDSSKP) the chain is Vesicular.

It belongs to the synaptobrevin family.

The protein localises to the cell membrane. It localises to the endomembrane system. Its subcellular location is the golgi apparatus. The protein resides in the trans-Golgi network membrane. Its function is as follows. May participate in trafficking events that are associated with myogenesis, such as myoblast fusion and/or GLUT4 trafficking. The protein is Vesicle-associated membrane protein 5 (Vamp5) of Rattus norvegicus (Rat).